Here is a 134-residue protein sequence, read N- to C-terminus: Profilin-2 (134 aa).

Cys13 and Cys118 are joined by a disulfide. An Involved in PIP2 interaction motif is present at residues 84-100 (AVIRGKKGSGGITIKKT). Position 114 is a phosphothreonine (Thr114).

The protein belongs to the profilin family. In terms of assembly, occurs in many kinds of cells as a complex with monomeric actin in a 1:1 ratio. Phosphorylated by MAP kinases.

It is found in the cytoplasm. The protein resides in the cytoskeleton. Binds to actin and affects the structure of the cytoskeleton. At high concentrations, profilin prevents the polymerization of actin, whereas it enhances it at low concentrations. This chain is Profilin-2, found in Olea europaea (Common olive).